A 396-amino-acid chain; its full sequence is MTSANKSNIPALLALAVSAFAIGTTEFISVGLLPLIADDLDIPVTTAGLTVSLYALGVTFGAPILTSLTSSMSRKTLLLWIMFIFIAGNTMAATASSIGILLAARVISAFSHGVFMSIGSTIAADIVPEDKRASAISIMFTGLTVATVTGVPFGTFIGQQFGWRFAFMVIIAVGIIAFITNGILVPSKLRKGTKTTMRDQLKLVTNSRLLLLFVITALGYGGTFVVFTYLSPLLQEVTGFKAGTVAVILLGYGIAIAIGNMIGGKLSNRNPIAALFYMFIVQAIVLFVLTFTAPYQAAGLITILCMGLLAFMNVPGLQVYVVMLAERFVPSAVDVASAMNIAAFNAGIALGSYLGGVITDSIGLIHTAWIGGLMVVGAVILTGWSRLMEKRDRQEA.

Transmembrane regions (helical) follow at residues L12–L32, G48–L68, L78–I98, V106–I126, I138–G158, F165–V185, L209–Y229, A242–I262, P271–F291, A297–L317, A338–I358, and I362–T382.

The protein belongs to the major facilitator superfamily.

Its subcellular location is the cell membrane. This is an uncharacterized protein from Bacillus subtilis (strain 168).